A 451-amino-acid polypeptide reads, in one-letter code: Molybdate-anion transporter (451 aa).

The next 12 helical transmembrane spans lie at 1–21 (MLVT…VLEF), 45–65 (YDFY…GPYL), 79–99 (IAII…VSVP), 130–150 (FVLM…FSCF), 180–200 (NGGI…WLGL), 201–221 (GPAS…VLVI), 251–271 (VLLL…FIFL), 281–301 (APLG…SSLY), 316–336 (VLCL…FSTA), 346–366 (LLAF…MRFL), 378–398 (GVLN…LLVL), and 410–430 (MFSL…SLFT).

It belongs to the major facilitator superfamily.

Its subcellular location is the cell membrane. Mediates high-affinity intracellular uptake of the rare oligo-element molybdenum. The polypeptide is Molybdate-anion transporter (mfsd5) (Xenopus laevis (African clawed frog)).